The chain runs to 356 residues: Arginine kinase Scy s 2 (356 aa).

In terms of domain architecture, Phosphagen kinase N-terminal spans 9-91; that stretch reads KLEEGFKKLE…FDPIIEDYHK (83 aa). 64 to 68 contributes to the L-arginine binding site; it reads GVGVY. Positions 119-356 constitute a Phosphagen kinase C-terminal domain; it reads FVISTRVRCG…LELIKMEKEM (238 aa). ATP is bound by residues 122–126 and histidine 185; that span reads STRVR. Glutamate 225 is a binding site for L-arginine. Arginine 229 is a binding site for ATP. Cysteine 271 is a binding site for L-arginine. ATP-binding positions include 280 to 284 and 309 to 314; these read RASVH and RGTRGE. An L-arginine-binding site is contributed by glutamate 314.

It belongs to the ATP:guanido phosphotransferase family. Muscle (at protein level).

It catalyses the reaction L-arginine + ATP = N(omega)-phospho-L-arginine + ADP + H(+). In terms of biological role, catalyzes the reversible transfer of high energy ATP gamma-phosphate group to L-arginine. In Scylla serrata (Mud crab), this protein is Arginine kinase Scy s 2.